The chain runs to 335 residues: Beta-hexosaminidase (335 aa).

Substrate contacts are provided by residues aspartate 60, arginine 68, arginine 133, and 163 to 164; that span reads KH. Residue histidine 176 is the Proton donor/acceptor of the active site. The Nucleophile role is filled by aspartate 247.

It belongs to the glycosyl hydrolase 3 family. NagZ subfamily.

Its subcellular location is the cytoplasm. It carries out the reaction Hydrolysis of terminal non-reducing N-acetyl-D-hexosamine residues in N-acetyl-beta-D-hexosaminides.. Its pathway is cell wall biogenesis; peptidoglycan recycling. Its function is as follows. Plays a role in peptidoglycan recycling by cleaving the terminal beta-1,4-linked N-acetylglucosamine (GlcNAc) from peptide-linked peptidoglycan fragments, giving rise to free GlcNAc, anhydro-N-acetylmuramic acid and anhydro-N-acetylmuramic acid-linked peptides. The chain is Beta-hexosaminidase from Xylella fastidiosa (strain M12).